A 354-amino-acid polypeptide reads, in one-letter code: Rhodopsin (354 aa).

At 1–36 the chain is on the extracellular side; sequence MNGTEGPNFYVPFSNKSGVVRSPFEYPQYYLAEPWQ. Residues Asn2 and Asn15 are each glycosylated (N-linked (GlcNAc...) asparagine). The helical transmembrane segment at 37–61 threads the bilayer; the sequence is YSVLAAYMFLLILLGFPVNFLTLYV. Residues 62–73 are Cytoplasmic-facing; sequence TIQHKKLRTPLN. Residues 74–96 form a helical membrane-spanning segment; it reads YILLNLAFANHFMVFGGFPVTMY. At 97-110 the chain is on the extracellular side; it reads SSMHGYFVFGQTGC. Cys110 and Cys187 are disulfide-bonded. The helical transmembrane segment at 111 to 133 threads the bilayer; that stretch reads YIEGFFATMGGEIALWSLVVLAI. The 'Ionic lock' involved in activated form stabilization motif lies at 134–136; sequence ERY. At 134-152 the chain is on the cytoplasmic side; the sequence is ERYVVVCKPMSNFRFGENH. The chain crosses the membrane as a helical span at residues 153–173; it reads AIMGVMMTWIMALACAAPPLF. Residues 174 to 202 are Extracellular-facing; that stretch reads GWSRYIPEGMQCSCGVDYYTLKPEVNNES. Residues 203–224 form a helical membrane-spanning segment; the sequence is FVIYMFLVHFTIPLMIIFFCYG. Topologically, residues 225 to 252 are cytoplasmic; the sequence is RLVCTVKEAAAQQQESATTQKAEKEVTR. Residues 253-274 form a helical membrane-spanning segment; sequence MVIIMVVAFLICWVPYASVAFY. Residues 275–286 lie on the Extracellular side of the membrane; sequence IFSNQGTDFGPI. A helical transmembrane segment spans residues 287-308; it reads FMTVPAFFAKSSAIYNPVIYIV. Lys296 bears the N6-(retinylidene)lysine mark. Residues 309 to 354 are Cytoplasmic-facing; the sequence is LNKQFRNCMITTICCGKNPFGDDETTSAATSKTEASSVSSSQVSPA. Residues Cys322 and Cys323 are each lipidated (S-palmitoyl cysteine). A disordered region spans residues 332–354; sequence ETTSAATSKTEASSVSSSQVSPA. The segment covering 334–354 has biased composition (low complexity); that stretch reads TSAATSKTEASSVSSSQVSPA.

This sequence belongs to the G-protein coupled receptor 1 family. Opsin subfamily. Post-translationally, contains one covalently linked retinal chromophore. Upon light absorption, the covalently bound 11-cis-retinal is converted to all-trans-retinal. After hydrolysis of the Schiff base and release of the covalently bound all-trans-retinal, active rhodopsin is regenerated by binding of a fresh molecule of 11-cis-retinal.

It is found in the membrane. It localises to the cell projection. The protein localises to the cilium. Its subcellular location is the photoreceptor outer segment. Its function is as follows. Photoreceptor required for image-forming vision at low light intensity. Required for photoreceptor cell viability after birth. Light-induced isomerization of 11-cis to all-trans retinal triggers a conformational change that activates signaling via G-proteins. Subsequent receptor phosphorylation mediates displacement of the bound G-protein alpha subunit by arrestin and terminates signaling. In Ambystoma tigrinum (Eastern tiger salamander), this protein is Rhodopsin (RHO).